The sequence spans 272 residues: Protein UL11 (272 aa).

The signal sequence occupies residues 1 to 31 (MLFRYITFHREKVLYLTAACIFGVYISLHDA). At 32 to 224 (CIPVVGKIGT…PLQPSPQHQH (193 aa)) the chain is on the extracellular side. 4 N-linked (GlcNAc...) asparagine; by host glycosylation sites follow: asparagine 42, asparagine 93, asparagine 100, and asparagine 142. Positions 142–200 (NGTFPTTTTKKPTTTTRTTTTTTQRTTTTRTTTTAKKTTISTTHHKHPSPKKSTTPNSH) are disordered. Over residues 147-183 (TTTTKKPTTTTRTTTTTTQRTTTTRTTTTAKKTTIST) the composition is skewed to low complexity. Residues 225–245 (LATHALWVLAVVIVIIIIIIF) traverse the membrane as a helical segment. At 246 to 272 (YFRIPQKLWLLWQHDKHGIVLIPQTDL) the chain is on the cytoplasmic side.

This sequence belongs to the RL11 family. As to quaternary structure, interacts with host PTPRC; this interaction affects T-cell signaling. In terms of processing, glycosylated.

Its subcellular location is the host cell membrane. The protein resides in the host endoplasmic reticulum. In terms of biological role, plays a role in the modulation of host immune response by modulating T-cell function. Interacts with host PTPRC/CD45 and thereby reduces host TCR signaling and T-cell proliferation. The chain is Protein UL11 (UL11) from Human cytomegalovirus (strain Merlin) (HHV-5).